The chain runs to 308 residues: Sulfate adenylyltransferase subunit 2 (308 aa).

The tract at residues 286-308 (RQGRIIDHDGSASMEKKKQEGYF) is disordered.

It belongs to the PAPS reductase family. CysD subfamily. Heterodimer composed of CysD, the smaller subunit, and CysN.

The catalysed reaction is sulfate + ATP + H(+) = adenosine 5'-phosphosulfate + diphosphate. It participates in sulfur metabolism; hydrogen sulfide biosynthesis; sulfite from sulfate: step 1/3. In terms of biological role, with CysN forms the ATP sulfurylase (ATPS) that catalyzes the adenylation of sulfate producing adenosine 5'-phosphosulfate (APS) and diphosphate, the first enzymatic step in sulfur assimilation pathway. APS synthesis involves the formation of a high-energy phosphoric-sulfuric acid anhydride bond driven by GTP hydrolysis by CysN coupled to ATP hydrolysis by CysD. In Nocardia farcinica (strain IFM 10152), this protein is Sulfate adenylyltransferase subunit 2.